Consider the following 486-residue polypeptide: MSSSVEAEASAAAPLGSNNTRRFVDSALSACNGMIPTTEFHCWLADRLGENSFETNRIPFDRLSKWKFDASTENLVHADGRFFTVEGLQVETNYGAAPSWHQPIINQAEVGILGILVKEIDGVLHCLMSAKMEPGNVNVLQLSPTVQATRSNYTQAHRGSVPPYVDYFLGRGRGRVLVDVLQSEQGSWFYRKRNRNMVVEVQEEVPVLPDFCWLTLGQVLALLRQDNIVNMDTRTVLSCIPFHDSATGPELAASEEPFRQAVARSLSHGIDSSSISEAVGWFEEAKARYRLRATRVPLSRVDKWYRTDTEIAHQDGKYFAVIAVSVSATNREVASWTQPMIEPREQGEIALLVKRIGGVLHGLVHARVEAGYKWTAEIAPTVQCSVANYQSTPSNDWPPFLDDVLTADPETVRYESILSEEGGRFYQAQNRYRIIEVHEDFAARPPSDFRWMTLGQLGELLRSTHFLNIQARSLVASLHSLWALGR.

DTDP-4-dehydro-6-deoxy-alpha-D-glucose-binding positions include Trp66, 149-153, Ser187, Trp304, Arg367, 383-385, 388-389, and 421-424; these read TRSNY, QCS, NY, and EGGR.

This sequence belongs to the hexose 2,3-dehydratase family. As to quaternary structure, homodimer.

The catalysed reaction is dTDP-4-dehydro-6-deoxy-alpha-D-glucose = dTDP-3,4-didehydro-2,6-dideoxy-alpha-D-glucose + H2O. Its function is as follows. Involved in the biosynthesis of forosamine ((4-dimethylamino)-2,3,4,6-tetradeoxy-alpha-D-threo-hexopyranose), a highly deoxygenated sugar component of several bioactive natural products such as the insecticidal spinosyns A and D. Catalyzes the removal of the hydroxyl group at position C-2 of the hexose ring of dTDP-4-dehydro-6-deoxy-alpha-D-glucopyranose, and the oxidation of the hydroxyl group at position C-3 to form a carbonyl functionality. The product of the reaction, dTDP-2,6-dideoxy-D-glycero-hex-2-enos-4-ulose, is a highly unstable diketosugar, which spontaneously forms dTDP-3,4-didehydro-2,6-dideoxy-alpha-D-glucose. This is dTDP-4-dehydro-6-deoxy-alpha-D-glucopyranose 2,3-dehydratase from Saccharopolyspora spinosa.